The following is a 1162-amino-acid chain: Transcription termination factor 2 (1162 aa).

4 residues coordinate Zn(2+): Cys6, His9, Cys32, and Cys37. The GRF-type zinc-finger motif lies at 6–46; it reads CPEHGTFCFLKTGVRDGPNKGKSFYVCRADTCSFVRATDIP. Disordered stretches follow at residues 97-116, 142-358, 388-407, and 459-503; these read PDSK…ETFH, IKGE…EEDD, DRSV…KVEP, and LSPE…TQPV. Polar residues predominate over residues 105–116; the sequence is SNKSQHASETFH. Positions 142-178 are enriched in basic and acidic residues; that stretch reads IKGEGEEKKADKKQREKGDQLFDQKKEQKPEMMEKDL. Residue Lys143 forms a Glycyl lysine isopeptide (Lys-Gly) (interchain with G-Cter in SUMO2) linkage. Over residues 219–232 the composition is skewed to polar residues; the sequence is IKSQQCQGNELTRP. Positions 233-245 are enriched in low complexity; sequence SASSQEKSSGKSQ. Positions 246–258 are enriched in basic and acidic residues; the sequence is DVQRESEPLREKV. Residues 261–274 show a composition bias toward polar residues; it reads LLPQNVHSHNSISK. Residues 323-338 are compositionally biased toward low complexity; the sequence is PAPGGPAAQAAPAAPG. Residues 459–485 are compositionally biased toward polar residues; sequence LSPEQGTNEKSNSQVPQQSHFTKTTTG. At Ser460 the chain carries Phosphoserine. Residues 583-786 form the Helicase ATP-binding domain; that stretch reads WRESQKPQGG…YSLLKFLRCS (204 aa). An ATP-binding site is contributed by 596 to 603; sequence DDMGLGKT. The DEAH box signature appears at 737–740; sequence DEAH. Residues 871-890 form a disordered region; the sequence is KRHESRGNQSGRSPNNPFSR. Over residues 877 to 888 the composition is skewed to polar residues; sequence GNQSGRSPNNPF. Phosphoserine occurs at positions 883 and 908. Positions 995–1157 constitute a Helicase C-terminal domain; the sequence is SLLAELEAIQ…VTKLTLADLR (163 aa).

This sequence belongs to the SNF2/RAD54 helicase family. As to quaternary structure, interacts with CDC5L. Part of the spliceosome.

Its subcellular location is the cytoplasm. The protein localises to the nucleus. In terms of biological role, dsDNA-dependent ATPase which acts as a transcription termination factor by coupling ATP hydrolysis with removal of RNA polymerase II from the DNA template. May contribute to mitotic transcription repression. May also be involved in pre-mRNA splicing. This Homo sapiens (Human) protein is Transcription termination factor 2 (TTF2).